The primary structure comprises 257 residues: NH(3)-dependent NAD(+) synthetase (257 aa).

28–35 is a binding site for ATP; sequence GISGGVDS. Residue aspartate 34 coordinates Mg(2+). Residue arginine 109 coordinates deamido-NAD(+). Residue threonine 129 coordinates ATP. Glutamate 134 contacts Mg(2+). Deamido-NAD(+)-binding residues include lysine 142 and aspartate 149. 2 residues coordinate ATP: lysine 158 and serine 180. Residue 240 to 241 coordinates deamido-NAD(+); sequence HK.

Belongs to the NAD synthetase family. As to quaternary structure, homodimer.

The enzyme catalyses deamido-NAD(+) + NH4(+) + ATP = AMP + diphosphate + NAD(+) + H(+). It participates in cofactor biosynthesis; NAD(+) biosynthesis; NAD(+) from deamido-NAD(+) (ammonia route): step 1/1. Functionally, catalyzes the ATP-dependent amidation of deamido-NAD to form NAD. Uses ammonia as a nitrogen source. This chain is NH(3)-dependent NAD(+) synthetase, found in Pyrococcus horikoshii (strain ATCC 700860 / DSM 12428 / JCM 9974 / NBRC 100139 / OT-3).